Here is a 386-residue protein sequence, read N- to C-terminus: DNA methyltransferase CcrM (386 aa).

Positions 280 to 382 (LGKAELTVMT…LRKIIREQMA (103 aa)) constitute an RAMA domain.

This sequence belongs to the N(4)/N(6)-methyltransferase family.

The catalysed reaction is a 2'-deoxyadenosine in DNA + S-adenosyl-L-methionine = an N(6)-methyl-2'-deoxyadenosine in DNA + S-adenosyl-L-homocysteine + H(+). Functionally, a beta subtype methylase that recognizes the double-stranded sequence 5'-GANTC-3' and methylates A-2 on both strands. CcrM-mediated methylation has important cellular functions. Contributes to the accurate cell-cycle control of DNA replication and cellular morphology. In Brucella abortus (strain S19), this protein is DNA methyltransferase CcrM (ccrM).